The sequence spans 451 residues: Trigger factor (451 aa).

In terms of domain architecture, PPIase FKBP-type spans 163 to 248; sequence GDIIDMEYTV…IKALYVNILP (86 aa).

The protein belongs to the FKBP-type PPIase family. Tig subfamily.

It localises to the cytoplasm. It carries out the reaction [protein]-peptidylproline (omega=180) = [protein]-peptidylproline (omega=0). Involved in protein export. Acts as a chaperone by maintaining the newly synthesized protein in an open conformation. Functions as a peptidyl-prolyl cis-trans isomerase. In Leptospira borgpetersenii serovar Hardjo-bovis (strain JB197), this protein is Trigger factor.